Here is a 387-residue protein sequence, read N- to C-terminus: Succinate--CoA ligase [ADP-forming] subunit beta (387 aa).

One can recognise an ATP-grasp domain in the interval 9–236; sequence KELFAKHNVP…RDATDPLELK (228 aa). Residues Lys45, 52-54, Ser94, and Glu99 each bind ATP; that span reads GRG. Mg(2+)-binding residues include Asn191 and Asp205. Substrate is bound by residues Asn256 and 318–320; that span reads GIT.

It belongs to the succinate/malate CoA ligase beta subunit family. Heterotetramer of two alpha and two beta subunits. It depends on Mg(2+) as a cofactor.

It catalyses the reaction succinate + ATP + CoA = succinyl-CoA + ADP + phosphate. The enzyme catalyses GTP + succinate + CoA = succinyl-CoA + GDP + phosphate. It participates in carbohydrate metabolism; tricarboxylic acid cycle; succinate from succinyl-CoA (ligase route): step 1/1. Its function is as follows. Succinyl-CoA synthetase functions in the citric acid cycle (TCA), coupling the hydrolysis of succinyl-CoA to the synthesis of either ATP or GTP and thus represents the only step of substrate-level phosphorylation in the TCA. The beta subunit provides nucleotide specificity of the enzyme and binds the substrate succinate, while the binding sites for coenzyme A and phosphate are found in the alpha subunit. The protein is Succinate--CoA ligase [ADP-forming] subunit beta of Mycolicibacterium smegmatis (strain ATCC 700084 / mc(2)155) (Mycobacterium smegmatis).